A 450-amino-acid chain; its full sequence is UDP-N-acetylmuramoylalanine--D-glutamate ligase (450 aa).

Residue 119–125 (GSNGKTT) participates in ATP binding.

This sequence belongs to the MurCDEF family.

It localises to the cytoplasm. The enzyme catalyses UDP-N-acetyl-alpha-D-muramoyl-L-alanine + D-glutamate + ATP = UDP-N-acetyl-alpha-D-muramoyl-L-alanyl-D-glutamate + ADP + phosphate + H(+). Its pathway is cell wall biogenesis; peptidoglycan biosynthesis. Its function is as follows. Cell wall formation. Catalyzes the addition of glutamate to the nucleotide precursor UDP-N-acetylmuramoyl-L-alanine (UMA). The chain is UDP-N-acetylmuramoylalanine--D-glutamate ligase from Streptococcus gordonii (strain Challis / ATCC 35105 / BCRC 15272 / CH1 / DL1 / V288).